Consider the following 200-residue polypeptide: Endoribonuclease YbeY (200 aa).

Zn(2+)-binding residues include His120, His124, and His130.

Belongs to the endoribonuclease YbeY family. Zn(2+) serves as cofactor.

The protein resides in the cytoplasm. In terms of biological role, single strand-specific metallo-endoribonuclease involved in late-stage 70S ribosome quality control and in maturation of the 3' terminus of the 16S rRNA. The polypeptide is Endoribonuclease YbeY (Corynebacterium efficiens (strain DSM 44549 / YS-314 / AJ 12310 / JCM 11189 / NBRC 100395)).